The primary structure comprises 662 residues: Hypoxia-inducible factor 3-alpha (662 aa).

The interval 1–25 (MDWDQDRSSTELRKEKSRDAARSRR) is disordered. The 54-residue stretch at 12–65 (LRKEKSRDAARSRRSQETEVLYQLAHTLPFARGVSAHLDKASIMRLTISYLRMH) folds into the bHLH domain. Residues 75-98 (QVRKEGEPLDACYLKALEGFVMVL) form a nuclear localization signal region. 2 consecutive PAS domains span residues 80 to 150 (GEPL…PSLS) and 225 to 295 (PHPA…LSKG). The tract at residues 228–272 (ASLEPPLGRGAFLSRHSLDMKFTYCDERIAEVAGYSPDDLIGCSA) is nuclear export signal. The disordered stretch occupies residues 352 to 379 (EQTEQHTRRPPQLGTSSKKGIPGNSLDP). The short motif at 410 to 413 (LRRL) is the LRRLL element. 2 disordered regions span residues 417 to 445 (ILDG…ADLP) and 459 to 480 (STAR…PDTP). The segment covering 421-433 (PPTAATPSTPQAA) has biased composition (low complexity). The interval 448-581 (LAVGLENAHR…SEDKGLELLE (134 aa)) is ODD. The NTAD stretch occupies residues 450–501 (VGLENAHRLSTARKNKTMETDLDIAQDPDTPDLEMLAPYISMDDDFQLNSSE). A Glycyl lysine isopeptide (Lys-Gly) (interchain with G-Cter in ubiquitin) cross-link involves residue lysine 463. Residues 469-480 (TDLDIAQDPDTP) show a composition bias toward acidic residues. Residues 485–492 (LAPYISMD) carry the LAPYISMD motif. The residue at position 487 (proline 487) is a 4-hydroxyproline. The tract at residues 500–595 (SEQLPKVHRR…KRSPRLEPGS (96 aa)) is disordered. A compositionally biased stretch (basic residues) spans 505–521 (KVHRRPPRTARRPRARS). A Glycyl lysine isopeptide (Lys-Gly) (interchain with G-Cter in ubiquitin) cross-link involves residue lysine 565. The segment covering 572–584 (SEDKGLELLETKP) has biased composition (basic and acidic residues).

Interacts with ARNT, BAD, BCL2L2, EPAS1, HIF1A, MCL1 and VHL. In terms of processing, in normoxia, hydroxylated on Pro-487 in the oxygen-dependent degradation domain (ODD) by PHD. The hydroxylated proline promotes interaction with VHL, initiating rapid ubiquitination and subsequent proteasomal degradation. Ubiquitinated; ubiquitination occurs in a VHL- and oxygen-dependent pathway and subsequently targeted for proteasomal degradation. In terms of tissue distribution, expressed in the perivenous zone of the liver. Expressed in all tissues examined during normoxia. Expressed in brain and lung. Expressed in periportal and perivenous hepatocytes and in endothelial cells of the central vein (at protein level). Highest expression seen in the cerebral cortex, hippocampus, and lung. Low expression in myocardial tissue and liver.

The protein localises to the nucleus. The protein resides in the cytoplasm. It localises to the nucleus speckle. It is found in the mitochondrion. Functionally, acts as a transcriptional regulator in adaptive response to low oxygen tension. Attenuates the ability of transcription factor HIF1A, EPAS1 and the HIF1A-ARNT complex to bind to hypoxia-responsive elements (HRE) located within the enhancer/promoter of hypoxia-inducible target genes and hence inhibits HRE-driven transcriptional activation. Functions as an inhibitor of angiogenesis in hypoxic cells of the cornea. Plays a role in the development of the cardiorespiratory system. May also be involved in apoptosis. May act as a tumor suppressor. The sequence is that of Hypoxia-inducible factor 3-alpha from Rattus norvegicus (Rat).